The sequence spans 509 residues: Maturase K (509 aa).

The protein belongs to the intron maturase 2 family. MatK subfamily.

The protein resides in the plastid. It localises to the chloroplast. Its function is as follows. Usually encoded in the trnK tRNA gene intron. Probably assists in splicing its own and other chloroplast group II introns. The sequence is that of Maturase K from Trifolium semipilosum (Kenya clover).